Reading from the N-terminus, the 89-residue chain is UPF0237 protein Cgl1544/cg1742 (89 aa).

Residues 4–82 (IMTVTGQDHT…LVIRIQSEAL (79 aa)) form the ACT domain.

Belongs to the UPF0237 family.

This chain is UPF0237 protein Cgl1544/cg1742, found in Corynebacterium glutamicum (strain ATCC 13032 / DSM 20300 / JCM 1318 / BCRC 11384 / CCUG 27702 / LMG 3730 / NBRC 12168 / NCIMB 10025 / NRRL B-2784 / 534).